A 254-amino-acid chain; its full sequence is Adenosylcobinamide-GDP ribazoletransferase (254 aa).

Transmembrane regions (helical) follow at residues 36 to 56 (YYPL…TLLL), 61 to 81 (PLVT…GIHL), 114 to 134 (ALSA…LLAL), 138 to 158 (LVPY…LIGV), 197 to 217 (WVLQ…ILLF), and 232 to 252 (LYGA…FPLL).

It belongs to the CobS family. Requires Mg(2+) as cofactor.

The protein localises to the cell membrane. The catalysed reaction is alpha-ribazole + adenosylcob(III)inamide-GDP = adenosylcob(III)alamin + GMP + H(+). It catalyses the reaction alpha-ribazole 5'-phosphate + adenosylcob(III)inamide-GDP = adenosylcob(III)alamin 5'-phosphate + GMP + H(+). It participates in cofactor biosynthesis; adenosylcobalamin biosynthesis; adenosylcobalamin from cob(II)yrinate a,c-diamide: step 7/7. Its function is as follows. Joins adenosylcobinamide-GDP and alpha-ribazole to generate adenosylcobalamin (Ado-cobalamin). Also synthesizes adenosylcobalamin 5'-phosphate from adenosylcobinamide-GDP and alpha-ribazole 5'-phosphate. The protein is Adenosylcobinamide-GDP ribazoletransferase of Desulfitobacterium hafniense (strain Y51).